The primary structure comprises 161 residues: Probable calcium-binding protein CML16 (161 aa).

EF-hand domains lie at 8–43 (DQIK…LGIK), 44–79 (PRGD…DINE), 83–118 (INQE…MGHP), and 119–154 (LTYR…SAAD). The Ca(2+) site is built by Asp-21, Asp-23, Asp-25, Ser-27, Glu-32, Asp-57, Asn-59, Asn-61, Ser-63, Glu-68, Asp-96, Asp-98, Asn-100, Ser-102, Glu-107, Asp-132, Asn-134, Asp-136, and Glu-143.

Its function is as follows. Potential calcium sensor. This chain is Probable calcium-binding protein CML16 (CML16), found in Arabidopsis thaliana (Mouse-ear cress).